The primary structure comprises 325 residues: Gamma-hemolysin component B (325 aa).

A signal peptide spans 1–25; sequence MNMNKLVKSSVATSMALLLLSNTAN.

It belongs to the aerolysin family. Toxicity requires sequential binding and synergistic association of a class S and a class F component which form heterooligomeric complexes. HlgB (class F) associates with either hlgA thus forming an AB toxin or with hlgC thus forming a CB toxin. Interacts with host AMFR.

Toxin that seems to act by forming pores in the membrane of the cell. Has a hemolytic and a leucotoxic activity. Promotes host AMFR-mediated inflammation by mediating 'Lys-27'-linked ubiquitination of TAB3, TAK1-TAB3 complex formation and phosphorylation of TAK1/MAP3K7. In turn, activates host NF-kappa-B signaling pathway. The chain is Gamma-hemolysin component B (hlgB) from Staphylococcus aureus (strain MRSA252).